Here is a 425-residue protein sequence, read N- to C-terminus: Serine--tRNA ligase (425 aa).

233–235 (TAE) is an L-serine binding site. ATP is bound by residues 264 to 266 (RRE) and Val-280. Glu-287 contacts L-serine. Residue 351-354 (EVSS) participates in ATP binding. Position 387 (Ser-387) interacts with L-serine.

Belongs to the class-II aminoacyl-tRNA synthetase family. Type-1 seryl-tRNA synthetase subfamily. In terms of assembly, homodimer. The tRNA molecule binds across the dimer.

The protein resides in the cytoplasm. It catalyses the reaction tRNA(Ser) + L-serine + ATP = L-seryl-tRNA(Ser) + AMP + diphosphate + H(+). The enzyme catalyses tRNA(Sec) + L-serine + ATP = L-seryl-tRNA(Sec) + AMP + diphosphate + H(+). The protein operates within aminoacyl-tRNA biosynthesis; selenocysteinyl-tRNA(Sec) biosynthesis; L-seryl-tRNA(Sec) from L-serine and tRNA(Sec): step 1/1. Catalyzes the attachment of serine to tRNA(Ser). Is also able to aminoacylate tRNA(Sec) with serine, to form the misacylated tRNA L-seryl-tRNA(Sec), which will be further converted into selenocysteinyl-tRNA(Sec). In Gemmatimonas aurantiaca (strain DSM 14586 / JCM 11422 / NBRC 100505 / T-27), this protein is Serine--tRNA ligase.